The following is a 98-amino-acid chain: Large ribosomal subunit protein bL25 (98 aa).

Positions Met-1–Arg-23 are disordered.

This sequence belongs to the bacterial ribosomal protein bL25 family. Part of the 50S ribosomal subunit; part of the 5S rRNA/L5/L18/L25 subcomplex. Contacts the 5S rRNA. Binds to the 5S rRNA independently of L5 and L18.

This is one of the proteins that binds to the 5S RNA in the ribosome where it forms part of the central protuberance. The protein is Large ribosomal subunit protein bL25 of Acinetobacter baumannii (strain ATCC 17978 / DSM 105126 / CIP 53.77 / LMG 1025 / NCDC KC755 / 5377).